Here is a 111-residue protein sequence, read N- to C-terminus: Small ribosomal subunit protein uS10 (111 aa).

The protein belongs to the universal ribosomal protein uS10 family. In terms of assembly, part of the 30S ribosomal subunit.

Involved in the binding of tRNA to the ribosomes. This Protochlamydia amoebophila (strain UWE25) protein is Small ribosomal subunit protein uS10.